Consider the following 191-residue polypeptide: MEVPREIIEKLEIFQKLVKKWNKSINLVSDNTIHNFWQRHILDSLQLIQYIDNKEIHLVDIGSGAGLPGIVLSIAGVAQVSLIEADLRKCIFLEKASKISNNNVQIINQRIEKVEIDCSILTCRAFSNLNTIFNCIKNISVREKFLLLKGKNYLTEIVEAKERWLFGYLIHQSITCEEGKILEVSNLTKMI.

S-adenosyl-L-methionine-binding positions include Gly62, Leu67, 111–112 (IE), and Arg124.

The protein belongs to the methyltransferase superfamily. RNA methyltransferase RsmG family.

It localises to the cytoplasm. The catalysed reaction is guanosine(527) in 16S rRNA + S-adenosyl-L-methionine = N(7)-methylguanosine(527) in 16S rRNA + S-adenosyl-L-homocysteine. Functionally, specifically methylates the N7 position of guanine in position 527 of 16S rRNA. This is Ribosomal RNA small subunit methyltransferase G from Rickettsia rickettsii (strain Sheila Smith).